The following is a 289-amino-acid chain: uncharacterized protein (289 aa).

The N-terminal stretch at 1–19 (MAKWLGAPLARGVSTATRA) is a signal peptide. Transmembrane regions (helical) follow at residues 90–110 (GLLA…GWGV) and 257–277 (AALS…LVFA).

The protein localises to the cell membrane. This is an uncharacterized protein from Mycobacterium tuberculosis (strain ATCC 25618 / H37Rv).